The chain runs to 159 residues: Ribosomal RNA large subunit methyltransferase H (159 aa).

Residues Leu76, Gly108, and 127 to 132 (FSRMTF) each bind S-adenosyl-L-methionine.

Belongs to the RNA methyltransferase RlmH family. As to quaternary structure, homodimer.

Its subcellular location is the cytoplasm. The enzyme catalyses pseudouridine(1915) in 23S rRNA + S-adenosyl-L-methionine = N(3)-methylpseudouridine(1915) in 23S rRNA + S-adenosyl-L-homocysteine + H(+). Functionally, specifically methylates the pseudouridine at position 1915 (m3Psi1915) in 23S rRNA. In Clostridioides difficile (strain 630) (Peptoclostridium difficile), this protein is Ribosomal RNA large subunit methyltransferase H.